The primary structure comprises 212 residues: Transcriptional repressor CcpN (212 aa).

The region spanning 6–70 (LNKRQEHILQ…FYTGKTGTQL (65 aa)) is the HTH deoR-type domain. Residues 23–42 (ITGEHIAEKLNLTRATLRPD) constitute a DNA-binding region (H-T-H motif). 2 consecutive CBS domains span residues 83 to 139 (FQSI…QQEL) and 148 to 211 (MTRM…ENEI).

In terms of biological role, transcription repressor that binds to the promoter of gapB and pckA genes, preventing their expression. Acts as a regulator for catabolite repression of gluconeogenic genes. The polypeptide is Transcriptional repressor CcpN (ccpN) (Bacillus subtilis (strain 168)).